We begin with the raw amino-acid sequence, 149 residues long: Ribonuclease H (149 aa).

The 143-residue stretch at 1-143 (MNQVVIYTDG…ADALANKGVD (143 aa)) folds into the RNase H type-1 domain. Positions 9, 47, 69, and 135 each coordinate Mg(2+).

Belongs to the RNase H family. Monomer. It depends on Mg(2+) as a cofactor.

The protein localises to the cytoplasm. It catalyses the reaction Endonucleolytic cleavage to 5'-phosphomonoester.. In terms of biological role, endonuclease that specifically degrades the RNA of RNA-DNA hybrids. The chain is Ribonuclease H from Paracidovorax citrulli (strain AAC00-1) (Acidovorax citrulli).